Here is a 298-residue protein sequence, read N- to C-terminus: Zinc import ATP-binding protein ZnuC (298 aa).

Residues 17–232 form the ABC transporter domain; sequence IELRNAGVYR…PEYVRLFGSR (216 aa). 49–56 is an ATP binding site; the sequence is GPNGAGKS. The segment at 273–298 is disordered; sequence RGHCHVEDGHHHDHEHHHHEGGQPRA. Residues 276–298 show a composition bias toward basic and acidic residues; the sequence is CHVEDGHHHDHEHHHHEGGQPRA.

The protein belongs to the ABC transporter superfamily. Zinc importer (TC 3.A.1.15.5) family. The complex is composed of two ATP-binding proteins (ZnuC), two transmembrane proteins (ZnuB) and a solute-binding protein (ZnuA).

Its subcellular location is the cell inner membrane. It catalyses the reaction Zn(2+)(out) + ATP(in) + H2O(in) = Zn(2+)(in) + ADP(in) + phosphate(in) + H(+)(in). Its function is as follows. Part of the ABC transporter complex ZnuABC involved in zinc import. Responsible for energy coupling to the transport system. This Brucella abortus (strain 2308) protein is Zinc import ATP-binding protein ZnuC.